Reading from the N-terminus, the 430-residue chain is Levansucrase Lscgamma (430 aa).

Positions 60, 61, 147, 217, and 218 each coordinate sucrose. The Nucleophile role is filled by D61. Residue E302 is the Proton donor/acceptor of the active site.

The protein belongs to the glycosyl hydrolase 68 family. In terms of assembly, homodimer.

The enzyme catalyses [6)-beta-D-fructofuranosyl-(2-&gt;](n) alpha-D-glucopyranoside + sucrose = [6)-beta-D-fructofuranosyl-(2-&gt;](n+1) alpha-D-glucopyranoside + D-glucose. Its activity is regulated as follows. Sucrose hydrolase activity is negatively affected by salt concentration. The levan polymerization rate increases sharply in relation to sucrose concentration reaching the maximum at 100 mM sucrose, and then steadily decreases, suggesting a strong inhibition of the activity by the substrate. Its function is as follows. Catalyzes the synthesis of levan, a fructose polymer, by transferring the fructosyl moiety from sucrose to a growing acceptor molecule. Also displays sucrose hydrolase activity. Can depolymerize the levan produced once substrate is completely exhausted. This chain is Levansucrase Lscgamma, found in Pseudomonas syringae pv. actinidiae.